The chain runs to 34 residues: MSDINATRLPHPFPLGLQPCAGDVDNLTLTKGEG.

A propeptide spanning residues 1–10 (MSDINATRLP) is cleaved from the precursor. The segment at residues 11-19 (HPFPLGLQP) is a cross-link (cyclopeptide (His-Pro)). A propeptide spanning residues 20-34 (CAGDVDNLTLTKGEG) is cleaved from the precursor.

It belongs to the MSDIN fungal toxin family. Processed by the macrocyclase-peptidase enzyme POPB to yield a toxic cyclic nonapeptide. POPB first removes 10 residues from the N-terminus. Conformational trapping of the remaining peptide forces the enzyme to release this intermediate rather than proceed to macrocyclization. The enzyme rebinds the remaining peptide in a different conformation and catalyzes macrocyclization of the N-terminal 9 residues.

Probable toxin that belongs to the MSDIN-like toxin family responsible for a large number of food poisoning cases and deaths. This Amanita bisporigera (Destroying angel) protein is MSDIN-like toxin proprotein 12.